Here is a 268-residue protein sequence, read N- to C-terminus: Large ribosomal subunit protein uL3 (268 aa).

Gln-156 carries the post-translational modification N5-methylglutamine. Residues 242–259 (VENEAAPADADNAAPEAA) are compositionally biased toward low complexity. Residues 242–268 (VENEAAPADADNAAPEAAADGEEGTQA) are disordered.

The protein belongs to the universal ribosomal protein uL3 family. As to quaternary structure, part of the 50S ribosomal subunit. Forms a cluster with proteins L14 and L19. In terms of processing, methylated by PrmB.

One of the primary rRNA binding proteins, it binds directly near the 3'-end of the 23S rRNA, where it nucleates assembly of the 50S subunit. The protein is Large ribosomal subunit protein uL3 of Maricaulis maris (strain MCS10) (Caulobacter maris).